The sequence spans 357 residues: C-X-C chemokine receptor type 2 (357 aa).

The Extracellular segment spans residues 1–45 (FNMESDSFEDFWKGEDLSNYSYSSTLPPFLLDAAPCEPESLEINK). An N-linked (GlcNAc...) asparagine glycan is attached at N19. A helical transmembrane segment spans residues 46–72 (YFVVIIYALVFLLSLLGNSLVMLVILY). Residues 73–81 (SRVGRSVTD) lie on the Cytoplasmic side of the membrane. The chain crosses the membrane as a helical span at residues 82 to 102 (VYLLNLALADLLFALTLPIWA). Over 103 to 117 (ASKVNGWIFGTFLCK) the chain is Extracellular. A disulfide bridge connects residues C116 and C193. Residues 118–139 (VVSLLKEVNFYSGILLLACISV) traverse the membrane as a helical segment. The Cytoplasmic segment spans residues 140–160 (DRYLAIVHATRTLTQKRYLVK). The helical transmembrane segment at 161–180 (FICLSIWGLSLLLALPVLLF) threads the bilayer. The Extracellular segment spans residues 181-205 (RRTVYSSNVSPACYEDMGNNTANWR). The chain crosses the membrane as a helical span at residues 206–228 (MLLRILPQSFGFIVPLLIMLFCY). At 229–248 (GFTLRTLFKAHMGQKHRAMR) the chain is on the cytoplasmic side. Residues 249 to 270 (VIFAVVLIFLLCWLPYNLVLLA) traverse the membrane as a helical segment. The Extracellular portion of the chain corresponds to 271–291 (DTLMRTQVIQETCERRNHIDR). The helical transmembrane segment at 292 to 312 (ALDATEILGILHSCLNPLIYA) threads the bilayer. At 313-357 (FIGQKFRHGLLKILAIHGLISKDSLPKDSRPSFVGSSSGHTSTTL) the chain is on the cytoplasmic side.

Belongs to the G-protein coupled receptor 1 family. Interacts with IL8. Interacts with GNAI2. In terms of processing, phosphorylated upon ligand binding; which is required for desensitization.

The protein resides in the cell membrane. In terms of biological role, receptor for interleukin-8 which is a powerful neutrophil chemotactic factor. Binding of IL-8 to the receptor causes activation of neutrophils. This response is mediated via a G-protein that activates a phosphatidylinositol-calcium second messenger system. Binds to IL-8 with high affinity. Also binds with high affinity to CXCL3, GRO/MGSA and NAP-2. The protein is C-X-C chemokine receptor type 2 (CXCR2) of Pan troglodytes (Chimpanzee).